Reading from the N-terminus, the 378-residue chain is 3-hydroxyisobutyryl-CoA hydrolase 1 (378 aa).

Ala-2 carries the N-acetylalanine modification. Residues Glu-94, Gly-119, Glu-142, and Asp-150 each contribute to the substrate site.

This sequence belongs to the enoyl-CoA hydratase/isomerase family. In terms of tissue distribution, expressed in roots, leaves, flowers and siliques.

The protein localises to the peroxisome. The catalysed reaction is 3-hydroxy-2-methylpropanoyl-CoA + H2O = 3-hydroxy-2-methylpropanoate + CoA + H(+). Its pathway is amino-acid degradation; L-valine degradation. Its activity is regulated as follows. Inhibited by copper. In terms of biological role, involved in valine catabolism. May be indirectly involved in benzoic acid biosynthesis and in cold signaling and cold tolerance. The chain is 3-hydroxyisobutyryl-CoA hydrolase 1 (CHY1) from Arabidopsis thaliana (Mouse-ear cress).